A 92-amino-acid chain; its full sequence is MKVSTAALAVLLCTMALWNEVFSAPYGADTPTACCFSYGRQIPRKFIADYFETSSLCSQPGVIFLTKRNRQICADPKETWVQEYITELELNA.

The signal sequence occupies residues 1–23 (MKVSTAALAVLLCTMALWNEVFS). 2 disulfide bridges follow: C34-C57 and C35-C73.

It belongs to the intercrine beta (chemokine CC) family. As to quaternary structure, self-associates. Also heterodimer of MIP-1-alpha(4-69) and MIP-1-beta(3-69). Interacts with CCR1.

The protein resides in the secreted. Functionally, monokine with inflammatory and chemokinetic properties. Binds to CCR1, CCR4 and CCR5. One of the major HIV-suppressive factors produced by CD8+ T-cells. Recombinant MIP-1-alpha induces a dose-dependent inhibition of different strains of HIV-1, HIV-2, and simian immunodeficiency virus (SIV). The sequence is that of C-C motif chemokine 3 (Ccl3) from Rattus norvegicus (Rat).